Here is a 486-residue protein sequence, read N- to C-terminus: NGFI-A-binding protein 1 (486 aa).

Residues 4–82 are NCD1; that stretch reads ALPRTLGELQ…RDWVTNPGLF (79 aa). Glycyl lysine isopeptide (Lys-Gly) (interchain with G-Cter in SUMO2) cross-links involve residues K126, K129, and K143. Residues 160–187 form a disordered region; sequence WQGHHATESEHSLSPADLGSPASPKESS. Phosphoserine is present on residues S171 and S182. Residue K211 forms a Glycyl lysine isopeptide (Lys-Gly) (interchain with G-Cter in SUMO2) linkage. The tract at residues 220-309 is NCD2; it reads LLKNNKKLAK…ARQVSREVTY (90 aa). The interval 306 to 337 is necessary for nuclear localization; it reads EVTYKYTYRTTRLKCGERDELSPKRIKIEDGF. S327 carries the phosphoserine modification. Residue K332 forms a Glycyl lysine isopeptide (Lys-Gly) (interchain with G-Cter in SUMO1); alternate linkage. A Glycyl lysine isopeptide (Lys-Gly) (interchain with G-Cter in SUMO2); alternate cross-link involves residue K332. Residues K354, K368, and K372 each participate in a glycyl lysine isopeptide (Lys-Gly) (interchain with G-Cter in SUMO2) cross-link. The segment at 398 to 438 is disordered; it reads RQSSGEQSPDGGLPSDSSDGQGERPLNLRIPSVQNRQPHHF. Positions 404–417 are enriched in low complexity; sequence QSPDGGLPSDSSDG. Residue S405 is modified to Phosphoserine. Residues K453, K464, and K476 each participate in a glycyl lysine isopeptide (Lys-Gly) (interchain with G-Cter in SUMO2) cross-link. A Glycyl lysine isopeptide (Lys-Gly) (interchain with G-Cter in SUMO1); alternate cross-link involves residue K479. A Glycyl lysine isopeptide (Lys-Gly) (interchain with G-Cter in SUMO2); alternate cross-link involves residue K479.

It belongs to the NAB family. Homomultimers may associate with EGR1 bound to DNA. In terms of tissue distribution, widely expressed in adult. In day 16 embryo highest levels in forebrain, thymus, salivary gland and cartilage.

The protein localises to the nucleus. Its function is as follows. Acts as a transcriptional repressor for zinc finger transcription factors EGR1 and EGR2. In Mus musculus (Mouse), this protein is NGFI-A-binding protein 1 (Nab1).